Here is a 519-residue protein sequence, read N- to C-terminus: B3 domain-containing protein Os03g0620400 (519 aa).

Residues 26-119 (MKCFHLQMSA…RFEVLILDSD (94 aa)) constitute a DNA-binding region (TF-B3 1). Residues 138 to 218 (ERNAAPVDIS…DPQMPPGRNY (81 aa)) form a disordered region. Positions 189–209 (SGEEGTDSSTSEDESSYELDD) are enriched in acidic residues. 2 DNA-binding regions (TF-B3) span residues 249 to 349 (VAIM…LRET) and 416 to 516 (YVSI…IRRN).

It localises to the nucleus. The sequence is that of B3 domain-containing protein Os03g0620400 from Oryza sativa subsp. japonica (Rice).